A 614-amino-acid chain; its full sequence is UvrABC system protein C (614 aa).

The GIY-YIG domain maps to 12–91 (ESPGVYLMKG…IKKHRPRYNL (80 aa)). A UVR domain is found at 201–236 (RDLLKTYRERMASAAANERYEEAARYRDLIRAIEVT).

Belongs to the UvrC family. As to quaternary structure, interacts with UvrB in an incision complex.

Its subcellular location is the cytoplasm. In terms of biological role, the UvrABC repair system catalyzes the recognition and processing of DNA lesions. UvrC both incises the 5' and 3' sides of the lesion. The N-terminal half is responsible for the 3' incision and the C-terminal half is responsible for the 5' incision. This is UvrABC system protein C from Geobacter metallireducens (strain ATCC 53774 / DSM 7210 / GS-15).